The chain runs to 309 residues: MDMRSHEMIERRREDNGNNNGGVVISNIISTNIDDNCNGNNNNTRVSCNSQTLDHHQSKSPSSFSISAAAKPTVRYRECLKNHAASVGGSVHDGCGEFMPSGEEGTIEALRCAACDCHRNFHRKEMDGVGSSDLISHHRHHHYHHNQYGGGGGRRPPPPNMMLNPLMLPPPPNYQPIHHHKYGMSPPGGGGMVTPMSVAYGGGGGGAESSSEDLNLYGQSSGEGAGAAAGQMAFSMSSSKKRFRTKFTTDQKERMMDFAEKLGWRMNKQDEEELKRFCGEIGVKRQVFKVWMHNNKNNAKKPPTPTTTL.

The segment covering 1–16 (MDMRSHEMIERRREDN) has biased composition (basic and acidic residues). The interval 1 to 21 (MDMRSHEMIERRREDNGNNNG) is disordered. The segment at 76–125 (YRECLKNHAASVGGSVHDGCGEFMPSGEEGTIEALRCAACDCHRNFHRKE) adopts a ZF-HD dimerization-type; degenerate zinc-finger fold. Residues 240 to 303 (KKRFRTKFTT…NNKNNAKKPP (64 aa)) constitute a DNA-binding region (homeobox).

As to quaternary structure, homo- and heterodimer with other ZFHD proteins. Interacts with MIF1, MIF2 and MIF3; these interactions prevent nuclear localization and DNA-binding to inhibit transcription regulation activity. Binds to ZHD1, ZHD2, ZHD4, ZHD10 and ZHD11. As to expression, mostly expressed in flowers and inflorescence.

The protein resides in the nucleus. Functionally, putative transcription factor. Binds DNA at 5'-ATTA-3' consensus promoter regions. Regulates floral architecture and leaf development. Regulators in the abscisic acid (ABA) signal pathway that confers sensitivity to ABA in an ARF2-dependent manner. This is Zinc-finger homeodomain protein 5 (ZHD5) from Arabidopsis thaliana (Mouse-ear cress).